The chain runs to 478 residues: Protein nucleotidyltransferase YdiU (478 aa).

G84, G86, R87, K107, D119, G120, R170, and R177 together coordinate ATP. D246 (proton acceptor) is an active-site residue. N247 and D256 together coordinate Mg(2+). D256 serves as a coordination point for ATP.

This sequence belongs to the SELO family. The cofactor is Mg(2+). Requires Mn(2+) as cofactor.

It catalyses the reaction L-seryl-[protein] + ATP = 3-O-(5'-adenylyl)-L-seryl-[protein] + diphosphate. The catalysed reaction is L-threonyl-[protein] + ATP = 3-O-(5'-adenylyl)-L-threonyl-[protein] + diphosphate. It carries out the reaction L-tyrosyl-[protein] + ATP = O-(5'-adenylyl)-L-tyrosyl-[protein] + diphosphate. The enzyme catalyses L-histidyl-[protein] + UTP = N(tele)-(5'-uridylyl)-L-histidyl-[protein] + diphosphate. It catalyses the reaction L-seryl-[protein] + UTP = O-(5'-uridylyl)-L-seryl-[protein] + diphosphate. The catalysed reaction is L-tyrosyl-[protein] + UTP = O-(5'-uridylyl)-L-tyrosyl-[protein] + diphosphate. In terms of biological role, nucleotidyltransferase involved in the post-translational modification of proteins. It can catalyze the addition of adenosine monophosphate (AMP) or uridine monophosphate (UMP) to a protein, resulting in modifications known as AMPylation and UMPylation. The sequence is that of Protein nucleotidyltransferase YdiU from Escherichia coli (strain K12 / MC4100 / BW2952).